The chain runs to 268 residues: Hydroxyethylthiazole kinase (268 aa).

Met-46 contacts substrate. ATP contacts are provided by Arg-122 and Thr-168. Gly-195 lines the substrate pocket.

It belongs to the Thz kinase family. Mg(2+) is required as a cofactor.

It catalyses the reaction 5-(2-hydroxyethyl)-4-methylthiazole + ATP = 4-methyl-5-(2-phosphooxyethyl)-thiazole + ADP + H(+). Its pathway is cofactor biosynthesis; thiamine diphosphate biosynthesis; 4-methyl-5-(2-phosphoethyl)-thiazole from 5-(2-hydroxyethyl)-4-methylthiazole: step 1/1. Catalyzes the phosphorylation of the hydroxyl group of 4-methyl-5-beta-hydroxyethylthiazole (THZ). This chain is Hydroxyethylthiazole kinase, found in Desulfatibacillum aliphaticivorans.